The chain runs to 1258 residues: Non-secreted LysM effector LysM19 (1258 aa).

Residues valine 148–serine 168 form a disordered region. Over residues serine 157–serine 168 the composition is skewed to basic and acidic residues. 2 consecutive LysM domains span residues isoleucine 1028 to leucine 1073 and arginine 1179 to threonine 1227.

Belongs to the secreted LysM effector family.

Non-secreted LysM effector that might be involved in manipulation of host defenses for successful infection. The chain is Non-secreted LysM effector LysM19 from Penicillium expansum (Blue mold rot fungus).